Here is a 419-residue protein sequence, read N- to C-terminus: Gamma-glutamyl phosphate reductase (419 aa).

It belongs to the gamma-glutamyl phosphate reductase family.

The protein localises to the cytoplasm. It carries out the reaction L-glutamate 5-semialdehyde + phosphate + NADP(+) = L-glutamyl 5-phosphate + NADPH + H(+). The protein operates within amino-acid biosynthesis; L-proline biosynthesis; L-glutamate 5-semialdehyde from L-glutamate: step 2/2. Catalyzes the NADPH-dependent reduction of L-glutamate 5-phosphate into L-glutamate 5-semialdehyde and phosphate. The product spontaneously undergoes cyclization to form 1-pyrroline-5-carboxylate. The polypeptide is Gamma-glutamyl phosphate reductase (Nitratidesulfovibrio vulgaris (strain ATCC 29579 / DSM 644 / CCUG 34227 / NCIMB 8303 / VKM B-1760 / Hildenborough) (Desulfovibrio vulgaris)).